The primary structure comprises 127 residues: Fumarate reductase subunit C (127 aa).

3 consecutive transmembrane segments (helical) span residues 30–50 (ATIL…GSLV), 67–87 (IVVA…QTFF), and 107–127 (VVVL…LVIV).

Belongs to the FrdC family. In terms of assembly, part of an enzyme complex containing four subunits: a flavoprotein (FrdA), an iron-sulfur protein (FrdB), and two hydrophobic anchor proteins (FrdC and FrdD).

Its subcellular location is the cell inner membrane. In terms of biological role, anchors the catalytic components of the fumarate reductase complex to the cell membrane, binds quinones. The polypeptide is Fumarate reductase subunit C (Aliivibrio salmonicida (strain LFI1238) (Vibrio salmonicida (strain LFI1238))).